A 388-amino-acid chain; its full sequence is Outer membrane protein assembly factor BamB (388 aa).

The signal sequence occupies residues 1-17; the sequence is MVLSLLSVMLLSGYKFL.

The protein belongs to the BamB family. Part of the Bam complex, which is composed of the outer membrane protein BamA, and four lipoproteins BamB, BamC, BamD and BamE.

The protein resides in the cell outer membrane. In terms of biological role, part of the outer membrane protein assembly complex, which is involved in assembly and insertion of beta-barrel proteins into the outer membrane. In Moranella endobia (strain PCIT), this protein is Outer membrane protein assembly factor BamB.